Reading from the N-terminus, the 245-residue chain is Triosephosphate isomerase (245 aa).

4-6 (NWK) contributes to the substrate binding site. Histidine 91 (electrophile) is an active-site residue. Glutamate 161 functions as the Proton acceptor in the catalytic mechanism. Substrate contacts are provided by residues glycine 167, serine 207, and 228–229 (GG).

This sequence belongs to the triosephosphate isomerase family. Homodimer.

It is found in the cytoplasm. It carries out the reaction D-glyceraldehyde 3-phosphate = dihydroxyacetone phosphate. It participates in carbohydrate biosynthesis; gluconeogenesis. The protein operates within carbohydrate degradation; glycolysis; D-glyceraldehyde 3-phosphate from glycerone phosphate: step 1/1. Functionally, involved in the gluconeogenesis. Catalyzes stereospecifically the conversion of dihydroxyacetone phosphate (DHAP) to D-glyceraldehyde-3-phosphate (G3P). The chain is Triosephosphate isomerase from Chlorobaculum tepidum (strain ATCC 49652 / DSM 12025 / NBRC 103806 / TLS) (Chlorobium tepidum).